The following is a 510-amino-acid chain: Holliday junction branch migration ATPase PINA (510 aa).

Homohexamer. Interacts with Holliday junction resolvase Hjc, interacts with helicase Hjm (Hel308).

It catalyses the reaction ATP + H2O = ADP + phosphate + H(+). In terms of biological role, important for growth at low temperatures (less than 65 degrees Celsius in this organism). Promotes Holliday junction (HJ) branch migration and unwinds Y-shaped DNA (but not replication forks or dsDNA) in an ATP hydrolysis-dependent manner. Stimulates cleavage by HJ resolvase Hjc. Hjc, Hjm (Hel308) and PINA coordinate HJ migration and cleavage of replication forks in a coordinated way. Probably acts as an ATP-dependent pump that pulls DNA through the hexamer. The sequence is that of Holliday junction branch migration ATPase PINA from Sulfolobus acidocaldarius (strain ATCC 33909 / DSM 639 / JCM 8929 / NBRC 15157 / NCIMB 11770).